A 196-amino-acid chain; its full sequence is Imidazoleglycerol-phosphate dehydratase (196 aa).

The protein belongs to the imidazoleglycerol-phosphate dehydratase family.

The protein resides in the cytoplasm. The enzyme catalyses D-erythro-1-(imidazol-4-yl)glycerol 3-phosphate = 3-(imidazol-4-yl)-2-oxopropyl phosphate + H2O. It participates in amino-acid biosynthesis; L-histidine biosynthesis; L-histidine from 5-phospho-alpha-D-ribose 1-diphosphate: step 6/9. This Lachnoclostridium phytofermentans (strain ATCC 700394 / DSM 18823 / ISDg) (Clostridium phytofermentans) protein is Imidazoleglycerol-phosphate dehydratase.